A 226-amino-acid chain; its full sequence is Fibronectin type III domain-containing protein 9 (226 aa).

Residues 1–101 (MNIEVGNVSH…FHTLDKSPLA (101 aa)) form the Fibronectin type-III domain. The chain crosses the membrane as a helical span at residues 113-133 (LWVLMAILLACFTAVLAFICL).

It is found in the membrane. The polypeptide is Fibronectin type III domain-containing protein 9 (Fndc9) (Mus musculus (Mouse)).